Here is a 302-residue protein sequence, read N- to C-terminus: Sulfate adenylyltransferase subunit 2 (302 aa).

Residues 280–302 (RQGRAIDHDQSGSMELKKRQGYF) are disordered.

It belongs to the PAPS reductase family. CysD subfamily. In terms of assembly, heterodimer composed of CysD, the smaller subunit, and CysN.

It catalyses the reaction sulfate + ATP + H(+) = adenosine 5'-phosphosulfate + diphosphate. It functions in the pathway sulfur metabolism; hydrogen sulfide biosynthesis; sulfite from sulfate: step 1/3. Functionally, with CysN forms the ATP sulfurylase (ATPS) that catalyzes the adenylation of sulfate producing adenosine 5'-phosphosulfate (APS) and diphosphate, the first enzymatic step in sulfur assimilation pathway. APS synthesis involves the formation of a high-energy phosphoric-sulfuric acid anhydride bond driven by GTP hydrolysis by CysN coupled to ATP hydrolysis by CysD. The sequence is that of Sulfate adenylyltransferase subunit 2 from Vibrio atlanticus (strain LGP32) (Vibrio splendidus (strain Mel32)).